Consider the following 440-residue polypeptide: GTPase Der (440 aa).

EngA-type G domains follow at residues 3-168 (PIIA…GKMD) and 177-353 (LKLA…EEYT). GTP is bound by residues 9 to 16 (GRPNVGKS), 56 to 60 (DTGGL), 119 to 122 (NKID), 183 to 190 (GKPNAGKS), 230 to 234 (DTAGI), and 295 to 298 (NKWD). One can recognise a KH-like domain in the interval 354–438 (KRISTGLLNT…PIMISFENKS (85 aa)).

This sequence belongs to the TRAFAC class TrmE-Era-EngA-EngB-Septin-like GTPase superfamily. EngA (Der) GTPase family. Associates with the 50S ribosomal subunit.

GTPase that plays an essential role in the late steps of ribosome biogenesis. This Fusobacterium nucleatum subsp. nucleatum (strain ATCC 25586 / DSM 15643 / BCRC 10681 / CIP 101130 / JCM 8532 / KCTC 2640 / LMG 13131 / VPI 4355) protein is GTPase Der.